Reading from the N-terminus, the 420-residue chain is Serine hydroxymethyltransferase (420 aa).

Residues Leu121 and 125–127 (GHL) each bind (6S)-5,6,7,8-tetrahydrofolate. Lys229 bears the N6-(pyridoxal phosphate)lysine mark.

This sequence belongs to the SHMT family. Homodimer. Pyridoxal 5'-phosphate serves as cofactor.

Its subcellular location is the cytoplasm. The enzyme catalyses (6R)-5,10-methylene-5,6,7,8-tetrahydrofolate + glycine + H2O = (6S)-5,6,7,8-tetrahydrofolate + L-serine. Its pathway is one-carbon metabolism; tetrahydrofolate interconversion. It participates in amino-acid biosynthesis; glycine biosynthesis; glycine from L-serine: step 1/1. Its function is as follows. Catalyzes the reversible interconversion of serine and glycine with tetrahydrofolate (THF) serving as the one-carbon carrier. This reaction serves as the major source of one-carbon groups required for the biosynthesis of purines, thymidylate, methionine, and other important biomolecules. Also exhibits THF-independent aldolase activity toward beta-hydroxyamino acids, producing glycine and aldehydes, via a retro-aldol mechanism. In Glaesserella parasuis serovar 5 (strain SH0165) (Haemophilus parasuis), this protein is Serine hydroxymethyltransferase.